The sequence spans 99 residues: Aspartyl/glutamyl-tRNA(Asn/Gln) amidotransferase subunit C (99 aa).

This sequence belongs to the GatC family. Heterotrimer of A, B and C subunits.

The catalysed reaction is L-glutamyl-tRNA(Gln) + L-glutamine + ATP + H2O = L-glutaminyl-tRNA(Gln) + L-glutamate + ADP + phosphate + H(+). It carries out the reaction L-aspartyl-tRNA(Asn) + L-glutamine + ATP + H2O = L-asparaginyl-tRNA(Asn) + L-glutamate + ADP + phosphate + 2 H(+). Its function is as follows. Allows the formation of correctly charged Asn-tRNA(Asn) or Gln-tRNA(Gln) through the transamidation of misacylated Asp-tRNA(Asn) or Glu-tRNA(Gln) in organisms which lack either or both of asparaginyl-tRNA or glutaminyl-tRNA synthetases. The reaction takes place in the presence of glutamine and ATP through an activated phospho-Asp-tRNA(Asn) or phospho-Glu-tRNA(Gln). The protein is Aspartyl/glutamyl-tRNA(Asn/Gln) amidotransferase subunit C of Delftia acidovorans (strain DSM 14801 / SPH-1).